A 336-amino-acid chain; its full sequence is Ornithine carbamoyltransferase, catabolic (336 aa).

Residues 57-60, Gln-84, Arg-108, and 135-138 contribute to the carbamoyl phosphate site; these read STRT and HPTQ. L-ornithine is bound by residues Asn-168, Asp-232, and 236–237; that span reads SM. Carbamoyl phosphate contacts are provided by residues 274–275 and Arg-321; that span reads CL.

This sequence belongs to the aspartate/ornithine carbamoyltransferase superfamily. OTCase family.

Its subcellular location is the cytoplasm. The catalysed reaction is carbamoyl phosphate + L-ornithine = L-citrulline + phosphate + H(+). It participates in amino-acid degradation; L-arginine degradation via ADI pathway; carbamoyl phosphate from L-arginine: step 2/2. Its function is as follows. Reversibly catalyzes the transfer of the carbamoyl group from carbamoyl phosphate (CP) to the N(epsilon) atom of ornithine (ORN) to produce L-citrulline. This is Ornithine carbamoyltransferase, catabolic (arcB) from Ectopseudomonas mendocina (Pseudomonas mendocina).